Here is a 129-residue protein sequence, read N- to C-terminus: Probable tautomerase YrdN (129 aa).

Catalysis depends on P2, which acts as the Proton acceptor; via imino nitrogen.

It belongs to the 4-oxalocrotonate tautomerase family.

Putative target of GltR. In Bacillus subtilis (strain 168), this protein is Probable tautomerase YrdN (yrdN).